We begin with the raw amino-acid sequence, 253 residues long: Phosphate import ATP-binding protein PstB (253 aa).

Residues 5 to 248 (IETVNLNVYY…PEHELTEKYV (244 aa)) form the ABC transporter domain. 37–44 (GPSGCGKS) is a binding site for ATP.

It belongs to the ABC transporter superfamily. Phosphate importer (TC 3.A.1.7) family. The complex is composed of two ATP-binding proteins (PstB), two transmembrane proteins (PstC and PstA) and a solute-binding protein (PstS).

Its subcellular location is the cell membrane. The enzyme catalyses phosphate(out) + ATP + H2O = ADP + 2 phosphate(in) + H(+). Part of the ABC transporter complex PstSACB involved in phosphate import. Responsible for energy coupling to the transport system. The sequence is that of Phosphate import ATP-binding protein PstB from Thermococcus kodakarensis (strain ATCC BAA-918 / JCM 12380 / KOD1) (Pyrococcus kodakaraensis (strain KOD1)).